A 326-amino-acid chain; its full sequence is tRNA-modifying protein YgfZ (326 aa).

Folate is bound by residues Trp-27 and Trp-189.

It belongs to the tRNA-modifying YgfZ family.

The protein localises to the cytoplasm. Functionally, folate-binding protein involved in regulating the level of ATP-DnaA and in the modification of some tRNAs. It is probably a key factor in regulatory networks that act via tRNA modification, such as initiation of chromosomal replication. The sequence is that of tRNA-modifying protein YgfZ from Salmonella paratyphi A (strain AKU_12601).